Consider the following 248-residue polypeptide: UPF0246 protein lp_0089 (248 aa).

It belongs to the UPF0246 family.

The chain is UPF0246 protein lp_0089 from Lactiplantibacillus plantarum (strain ATCC BAA-793 / NCIMB 8826 / WCFS1) (Lactobacillus plantarum).